Here is a 222-residue protein sequence, read N- to C-terminus: Salivary anticoagulant protein P23 (222 aa).

An N-terminal signal peptide occupies residues methionine 1–alanine 17. 4 N-linked (GlcNAc...) asparagine glycosylation sites follow: asparagine 56, asparagine 73, asparagine 109, and asparagine 114.

As to expression, salivary gland (at protein level). Adult midgut.

The protein resides in the secreted. Inhibits host coagulation by delaying thrombin generation and reducing endogenous thrombin potential (ETP). This is Salivary anticoagulant protein P23 from Ixodes scapularis (Black-legged tick).